Consider the following 157-residue polypeptide: VVEVCVRVTGGEVGDASSLAPKIGPLGLSPKKIGEDIAKETLKDWKGLRITVKLTVQNRQAKISVIPSAAALVIKALKEPARDRKKEKNIKHTGSVTMSDIIEIARVMRPRSCAKDLANGCKEILGTAVSVGCKVDGKDPRDVISAIDDGAIEIPDA.

The protein belongs to the universal ribosomal protein uL11 family.

Its function is as follows. This protein binds directly to 26S ribosomal RNA. The sequence is that of Large ribosomal subunit protein uL11 (RPL12) from Chlamydomonas reinhardtii (Chlamydomonas smithii).